We begin with the raw amino-acid sequence, 434 residues long: MMADTEMQEQDVPSGTKGVVEEPSELEKDLNSIERPKSPVPEDTTHTLDSDVHLSDAPIANQIEANEEVGGQNSVDGRNGDVDQSEKKITSDGGQEETTLGESNPLKGDPSSPHVPEESVKKWKTWLLSDAEAREVDEAGAPQDQEAFIKEVEAFNKENFLEFKAPKFYGQPLNCLKLWRAVIKLGGYDVVTTSKLWRQVGESFHPPKTCTTVSWTFRIFYEKALLEYEKHLRQNGELNLPGSASLPSSGIEKEASSHQASGSGRTRRDAAARAMQGWHSQRLLGSGEVTEPIVKEKGLNSTPKQKNLKNIGVQKQKTTTGMDLVFSHESEKQSTAEVIDVGPPADWVKINVRETKDCFEIFALVPGLLREEVRVQSDPAGRLVIAGQPEQLDNPWGITPFKKVVNFPARIDPLHTSAVVSLHGRLFVRVPFEQ.

The tract at residues 1 to 120 (MMADTEMQEQ…SSPHVPEESV (120 aa)) is disordered. Basic and acidic residues-rich tracts occupy residues 25-37 (ELEKDLNSIERPK), 43-54 (DTTHTLDSDVHL), and 78-90 (RNGDVDQSEKKIT). Residues 92–102 (DGGQEETTLGE) are compositionally biased toward polar residues. Residues 142–233 (PQDQEAFIKE…ALLEYEKHLR (92 aa)) form the ARID domain. The interval 237-274 (ELNLPGSASLPSSGIEKEASSHQASGSGRTRRDAAARA) is disordered. A sHSP domain is found at 336–434 (AEVIDVGPPA…RLFVRVPFEQ (99 aa)).

This sequence belongs to the small heat shock protein (HSP20) family.

It is found in the nucleus. In Arabidopsis thaliana (Mouse-ear cress), this protein is AT-rich interactive domain-containing protein 5 (ARID5).